We begin with the raw amino-acid sequence, 357 residues long: Probable leucine aminopeptidase TRV_02148.1 (357 aa).

A signal peptide spans 1 to 15 (MKVLAALALSALAMA). Asn-76 carries an N-linked (GlcNAc...) asparagine glycan. Zn(2+) contacts are provided by His-167 and Asp-185. The segment at 169–188 (DSINGKNPQGEAPGADDNGS) is disordered. Asn-186 carries an N-linked (GlcNAc...) asparagine glycan. 2 residues coordinate Zn(2+): Glu-224 and Asp-251. A glycan (N-linked (GlcNAc...) asparagine) is linked at Asn-269. Cys-291 and Cys-295 are oxidised to a cystine. His-324 is a binding site for Zn(2+).

Belongs to the peptidase M28 family. M28E subfamily. In terms of assembly, monomer. The cofactor is Zn(2+).

It is found in the secreted. Probable extracellular aminopeptidase which contributes to pathogenicity. The protein is Probable leucine aminopeptidase TRV_02148.1 of Trichophyton verrucosum (strain HKI 0517).